Here is a 410-residue protein sequence, read N- to C-terminus: MVRVRAVVMARDDSSGGWLPVGGGGLSQVSVCRVRGARPEGGARQGHYVIHGERLRDQKTTLECTLKPGLVYNKVNPIFHHWSLGDCKFGLTFQSPAEADEFQKSLLAALAALGRGSLTPSSSSSSSSPSQDTAETPCPLTSHVDSDSSSSHSRQETPPSAAAAPIITMESASGFGPTTPPQRRRSSAQSYPPLLPFTGIPEPSEPLAGAGGLGWGGRGYEDYRRSGPPAPLALSTCVVRFAKTGALRGAALGPPAALPAPLTEAAPPAPPARPPPGPGPSSAPAKASPEAEEAARCVHCRALFRRRADGRGGRCAEAPDPGRLLVRRLSCLWCAESLLYHCLSDAEGDFSDPCACEPGHPRPAARWAALAALSLAVPCLCCYAPLRACHWVAARCGCAGCGGRHEEAAR.

The region spanning 1–113 (MVRVRAVVMA…KSLLAALAAL (113 aa)) is the WH1 domain. The segment at 117–210 (SLTPSSSSSS…PEPSEPLAGA (94 aa)) is disordered. Composition is skewed to low complexity over residues 120–130 (PSSSSSSSSPS) and 147–165 (DSSS…AAAP). The 50-residue stretch at 195 to 244 (LPFTGIPEPSEPLAGAGGLGWGGRGYEDYRRSGPPAPLALSTCVVRFAKT) folds into the KBD domain. Residue Arg240 is modified to Asymmetric dimethylarginine. Arg248 bears the Omega-N-methylarginine mark. The tract at residues 258–288 (LPAPLTEAAPPAPPARPPPGPGPSSAPAKAS) is disordered. Residues 267–281 (PPAPPARPPPGPGPS) show a composition bias toward pro residues. The 112-residue stretch at 296–407 (RCVHCRALFR…CAGCGGRHEE (112 aa)) folds into the SPR domain.

Interacts with palmitoyltransferase ZDHHC17/HIP14; the interaction leads to palmitoylation of SPRED3. Post-translationally, phosphorylated on tyrosine. Palmitoylated by ZDHHC17/HIP14. In terms of processing, ubiquitinated.

It localises to the cell membrane. Its function is as follows. Tyrosine kinase substrate that inhibits growth-factor-mediated activation of MAP kinase. Inhibits fibroblast growth factor (FGF)-induced retinal lens fiber differentiation, probably by inhibiting FGF-mediated phosphorylation of ERK1/2. Inhibits TGFB-induced epithelial-to-mesenchymal transition in lens epithelial cells. This chain is Sprouty-related, EVH1 domain-containing protein 3 (SPRED3), found in Homo sapiens (Human).